The sequence spans 70 residues: V-type proton ATPase subunit e1 (70 aa).

Transmembrane regions (helical) follow at residues 1-21 and 36-56; these read MGFL…SLCV and LTLV…VYIA.

It belongs to the V-ATPase e1/e2 subunit family. V-ATPase is a heteromultimeric enzyme composed of a peripheral catalytic V1 complex (components A to H) attached to an integral membrane V0 proton pore complex (components: a, c, c'', d and e).

It localises to the golgi apparatus. Its subcellular location is the trans-Golgi network membrane. Subunit of the integral membrane V0 complex of vacuolar ATPase. V-ATPase is responsible for acidifying a variety of intracellular compartments in eukaryotic cells. The chain is V-type proton ATPase subunit e1 (VHA-e1) from Arabidopsis thaliana (Mouse-ear cress).